The primary structure comprises 197 residues: uncharacterized protein (197 aa).

Helical transmembrane passes span 30–50 (WVAM…VEMA), 61–81 (LVAG…PPLV), 101–121 (LWSV…LGLA), and 130–150 (IGEF…VAML).

Its subcellular location is the cell membrane. This is an uncharacterized protein from Mycobacterium tuberculosis (strain CDC 1551 / Oshkosh).